A 404-amino-acid chain; its full sequence is Cysteine desulfurase IscS (404 aa).

Pyridoxal 5'-phosphate is bound by residues 75-76, asparagine 155, glutamine 183, and 203-205; these read AT and SAH. Lysine 206 is modified (N6-(pyridoxal phosphate)lysine). Pyridoxal 5'-phosphate is bound at residue threonine 243. Cysteine 328 acts as the Cysteine persulfide intermediate in catalysis. Position 328 (cysteine 328) interacts with [2Fe-2S] cluster.

It belongs to the class-V pyridoxal-phosphate-dependent aminotransferase family. NifS/IscS subfamily. As to quaternary structure, homodimer. Forms a heterotetramer with IscU, interacts with other sulfur acceptors. Pyridoxal 5'-phosphate is required as a cofactor.

It is found in the cytoplasm. It catalyses the reaction (sulfur carrier)-H + L-cysteine = (sulfur carrier)-SH + L-alanine. It functions in the pathway cofactor biosynthesis; iron-sulfur cluster biosynthesis. Functionally, master enzyme that delivers sulfur to a number of partners involved in Fe-S cluster assembly, tRNA modification or cofactor biosynthesis. Catalyzes the removal of elemental sulfur atoms from cysteine to produce alanine. Functions as a sulfur delivery protein for Fe-S cluster synthesis onto IscU, an Fe-S scaffold assembly protein, as well as other S acceptor proteins. The sequence is that of Cysteine desulfurase IscS from Buchnera aphidicola subsp. Schizaphis graminum (strain Sg).